The chain runs to 415 residues: Serine hydroxymethyltransferase (415 aa).

Residues Leu-121 and 125 to 127 (GHL) each bind (6S)-5,6,7,8-tetrahydrofolate. Position 229 is an N6-(pyridoxal phosphate)lysine (Lys-229). 352–354 (TPF) serves as a coordination point for (6S)-5,6,7,8-tetrahydrofolate.

The protein belongs to the SHMT family. In terms of assembly, homodimer. It depends on pyridoxal 5'-phosphate as a cofactor.

Its subcellular location is the cytoplasm. The enzyme catalyses (6R)-5,10-methylene-5,6,7,8-tetrahydrofolate + glycine + H2O = (6S)-5,6,7,8-tetrahydrofolate + L-serine. It participates in one-carbon metabolism; tetrahydrofolate interconversion. Its pathway is amino-acid biosynthesis; glycine biosynthesis; glycine from L-serine: step 1/1. Catalyzes the reversible interconversion of serine and glycine with tetrahydrofolate (THF) serving as the one-carbon carrier. This reaction serves as the major source of one-carbon groups required for the biosynthesis of purines, thymidylate, methionine, and other important biomolecules. Also exhibits THF-independent aldolase activity toward beta-hydroxyamino acids, producing glycine and aldehydes, via a retro-aldol mechanism. The chain is Serine hydroxymethyltransferase from Chromobacterium violaceum (strain ATCC 12472 / DSM 30191 / JCM 1249 / CCUG 213 / NBRC 12614 / NCIMB 9131 / NCTC 9757 / MK).